A 346-amino-acid chain; its full sequence is uncharacterized protein (346 aa).

The chain crosses the membrane as a helical span at residues 16-36 (ILGIIICIILIVGFFISFDST).

Its subcellular location is the membrane. This is an uncharacterized protein from Methanocaldococcus jannaschii (strain ATCC 43067 / DSM 2661 / JAL-1 / JCM 10045 / NBRC 100440) (Methanococcus jannaschii).